Here is a 325-residue protein sequence, read N- to C-terminus: Homeobox protein Hox-A1a (325 aa).

The Antp-type hexapeptide signature appears at 187–192 (TFDWMK). Disordered stretches follow at residues 194–215 (KRNP…PNTV) and 264–325 (RMKQ…YPSN). Residues 212–271 (PNTVRTNFTTKQLTELEKEFHFNKYLTRARRVEIAAALQLNETQVKIWFQNRRMKQKKRE) constitute a DNA-binding region (homeobox). Residues 285–300 (SGERNQEKVEDGESEK) show a composition bias toward basic and acidic residues. Residues 301–317 (SVSAPSTPSPTSSTVSS) show a composition bias toward low complexity.

It belongs to the Antp homeobox family. Labial subfamily.

The protein resides in the nucleus. In terms of biological role, sequence-specific transcription factor which is part of a developmental regulatory system that provides cells with specific positional identities on the anterior-posterior axis. The polypeptide is Homeobox protein Hox-A1a (hoxa1a) (Takifugu rubripes (Japanese pufferfish)).